A 75-amino-acid polypeptide reads, in one-letter code: DNA-directed RNA polymerase subunit omega (75 aa).

It belongs to the RNA polymerase subunit omega family. In cyanobacteria the RNAP catalytic core is composed of 2 alpha, 1 beta, 1 beta', 1 gamma and 1 omega subunit. When a sigma factor is associated with the core the holoenzyme is formed, which can initiate transcription.

It carries out the reaction RNA(n) + a ribonucleoside 5'-triphosphate = RNA(n+1) + diphosphate. Functionally, promotes RNA polymerase assembly. Latches the N- and C-terminal regions of the beta' subunit thereby facilitating its interaction with the beta and alpha subunits. In Prochlorococcus marinus (strain MIT 9313), this protein is DNA-directed RNA polymerase subunit omega.